An 895-amino-acid chain; its full sequence is Receptor-like protein kinase FERONIA (895 aa).

An N-terminal signal peptide occupies residues 1–27 (MKITEGRFRLSLLLLLLLISAATLISA). Residues 28–447 (ADYSPTEKIL…TTRKSKSNTA (420 aa)) lie on the Extracellular side of the membrane. N-linked (GlcNAc...) asparagine glycosylation is found at N46, N124, N142, N171, N219, N269, N305, N330, N345, and N410. A helical membrane pass occupies residues 448–468 (IIAGAASGAVVLALIIGFCVF). At 469 to 895 (GAYRRRKRGD…FSQIMNPKGR (427 aa)) the chain is on the cytoplasmic side. The 275-residue stretch at 536 to 810 (FDESRVLGVG…GDVLWNLEFA (275 aa)) folds into the Protein kinase domain. ATP is bound by residues 542 to 550 (LGVGGFGKV) and K565. D661 (proton acceptor) is an active-site residue. Positions 844–895 (NDKSSDVYEGNVTDSRSSGIDMSIGGRSLASEDSDGLTPSAVFSQIMNPKGR) are disordered. S858, S866, S871, and S874 each carry phosphoserine. A compositionally biased stretch (polar residues) spans 884–895 (AVFSQIMNPKGR).

Belongs to the protein kinase superfamily. Ser/Thr protein kinase family. Interacts with ROPGEF1. Interacts with RALF1; triggering phosphorylation status and subsequent activation. Interacts with LRE and LLG1. Interacts, via its extracellular domain, with FERONIA at the synergid cell surface. Autophosphorylated. Post-translationally, phosphorylated at Ser-858, Ser-871 and Ser-874 upon activation by RALF1. Expressed in leaves, buds, flowers, siliques, young ovules primordia, and young anthers with immature pollen, but not detected in mature pollen. Highest expression in the synergid cells of the female gametophyte.

It is found in the cell membrane. It carries out the reaction L-seryl-[protein] + ATP = O-phospho-L-seryl-[protein] + ADP + H(+). The catalysed reaction is L-threonyl-[protein] + ATP = O-phospho-L-threonyl-[protein] + ADP + H(+). Its function is as follows. Receptor-like protein kinase that mediates the female control of male gamete delivery during fertilization, including growth cessation of compatible pollen tubes ensuring a reproductive isolation barriers, by regulating MLO7 subcellular polarization upon pollen tube perception in the female gametophyte synergids. Required for cell elongation during vegetative growth, mostly in a brassinosteroids- (BR-) independent manner. Acts as an upstream regulator for the Rac/Rop-signaling pathway that controls ROS-mediated root hair development. Seems to regulate a cross-talk between brassinosteroids and ethylene signaling pathways during hypocotyl elongation. Negative regulator of brassinosteroid response in light-grown hypocotyls, but required for brassinosteroid response in etiolated seedlings. Mediates sensitivity to powdery mildew (e.g. Golovinomyces orontii). Positive regulator of auxin-promoted growth that represses the abscisic acid (ABA) signaling via the activation of ABI2 phosphatase. Required for RALF1-mediated extracellular alkalinization in a signaling pathway preventing cell expansion. The sequence is that of Receptor-like protein kinase FERONIA from Arabidopsis thaliana (Mouse-ear cress).